The sequence spans 262 residues: uncharacterized protein (262 aa).

A signal peptide spans 1–22; the sequence is MMNNSITLLLALLVGLVGFAFT.

The protein belongs to the IIV-6 117L family.

This is an uncharacterized protein from Aedes vexans (Inland floodwater mosquito).